Here is a 601-residue protein sequence, read N- to C-terminus: Cdc42-interacting protein 4 (601 aa).

Residues 1 to 117 (MDWGTELWDQ…EMKQERKMHF (117 aa)) are required for translocation to the plasma membrane in response to insulin, podosome formation and interaction with AKAP9 and microtubules. An F-BAR domain is found at 1-264 (MDWGTELWDQ…AANAVDPKND (264 aa)). Residues 67 to 259 (FSQQQSFVQI…EGMKVAANAV (193 aa)) adopt a coiled-coil conformation. 3 disordered regions span residues 280–358 (GDVE…GRDP), 390–420 (DFSH…EVDQ), and 478–543 (NRGD…SPIG). Positions 289–302 (QPMNRAPSDSSLGT) are enriched in polar residues. The segment at 293-537 (RAPSDSSLGT…TEFDEDFEEE (245 aa)) is interaction with CDC42. Residues 293-601 (RAPSDSSLGT…PTSYLRVTLN (309 aa)) form an interaction with PDE6G region. Phosphoserine occurs at positions 296, 298, and 299. Basic residues predominate over residues 314-329 (GRSRTKRWPFGKKNKP). Ser-335 bears the Phosphoserine mark. Low complexity predominate over residues 336 to 346 (PLGGPVPSALP). Ser-351 bears the Phosphoserine mark. The stretch at 388-481 (TEDFSHLPPE…ESRVLSNRGD (94 aa)) forms a coiled coil. One can recognise an REM-1 domain in the interval 393-470 (HLPPEQQRKR…VQKYEAWLAE (78 aa)). Over residues 407 to 420 (LEERSRELQKEVDQ) the composition is skewed to basic and acidic residues. Positions 471–601 (AESRVLSNRG…PTSYLRVTLN (131 aa)) are required for interaction with FASLG and localization to lysosomes. Phosphoserine is present on Ser-482. The tract at residues 487–541 (ARPPDPPTSAPPDSSSNSASQDTKESSEEPPSEESQDTPIYTEFDEDFEEEPTSP) is interaction with DNM2 and WASL. Low complexity predominate over residues 497 to 506 (PPDSSSNSAS). The span at 529 to 538 (EFDEDFEEEP) shows a compositional bias: acidic residues. The interaction with DNM1 and WASL stretch occupies residues 529–601 (EFDEDFEEEP…PTSYLRVTLN (73 aa)). The required for podosome formation stretch occupies residues 538–601 (PTSPIGHCVA…PTSYLRVTLN (64 aa)). Residues 540-601 (SPIGHCVAIY…PTSYLRVTLN (62 aa)) enclose the SH3 domain. Residues 544–601 (HCVAIYHFEGSSEGTISMAEGEDLSLMEEDKGDGWTRVRRKEGGEGYVPTSYLRVTLN) are interaction with WAS. Residues 546-601 (VAIYHFEGSSEGTISMAEGEDLSLMEEDKGDGWTRVRRKEGGEGYVPTSYLRVTLN) form an interaction with ARHGAP17, DAAM1, DIAPH1 and DIAPH2 region.

This sequence belongs to the FNBP1 family. Homodimerizes, the dimers can polymerize end-to-end to form filamentous structures. Interacts with AKAP9, ARHGAP17, DAAM1, DIAPH1, DIAPH2, DNM1, FASLG/FASL, GAPVD1, LYN, microtubules, PDE6G, SRC and WAS/WASP. Interacts with the ligand binding domain of the thyroid receptor (TR) in the presence of thyroid hormone. May interact with CTNNB1 and HD/HTT. Interacts specifically with GTP-bound CDC42 and RHOQ. Interacts with DNM2 and WASL. Tyrosine phosphorylated. Also phosphorylated by PKA.

It localises to the cytoplasm. Its subcellular location is the cytoskeleton. It is found in the cell cortex. The protein localises to the lysosome. The protein resides in the golgi apparatus. It localises to the cell membrane. Its subcellular location is the cell projection. It is found in the phagocytic cup. Its function is as follows. Required to coordinate membrane tubulation with reorganization of the actin cytoskeleton during endocytosis. Also acts as a link between CDC42 signaling and regulation of the actin cytoskeleton. Binds to lipids such as phosphatidylinositol 4,5-bisphosphate and phosphatidylserine and promotes membrane invagination and the formation of tubules. Also enhances actin polymerization in the vicinity of membrane tubules by recruiting WASL/N-WASP which in turn activates the Arp2/3 complex. Actin polymerization and dynamin may promote the fission of membrane tubules to form endocytic vesicles. Required for the formation of podosomes, actin-rich adhesion structures specific to monocyte-derived cells. Required for translocation of GLUT4 to the plasma membrane in response to insulin signaling. May be required for the lysosomal retention of FASLG/FASL. This chain is Cdc42-interacting protein 4 (TRIP10), found in Pongo abelii (Sumatran orangutan).